The primary structure comprises 167 residues: MTENRKKKVATVKTISKLIKNSAGLIVFEYQGLSASELESVRNDLKNHLANTMVFKNRFVKLAIDKAGFKELDSYLFGPNIFVFFDEEHKNATIKKIAEIEKKNKFVKIKAGIYEEKVVSDAEVRVIATLPTYEEALTILARSMLAPLQQVSLGLKMLVDEKHIKAE.

It belongs to the universal ribosomal protein uL10 family. Part of the ribosomal stalk of the 50S ribosomal subunit. The N-terminus interacts with L11 and the large rRNA to form the base of the stalk. The C-terminus forms an elongated spine to which L12 dimers bind in a sequential fashion forming a multimeric L10(L12)X complex.

Its function is as follows. Forms part of the ribosomal stalk, playing a central role in the interaction of the ribosome with GTP-bound translation factors. This is Large ribosomal subunit protein uL10 from Mycoplasma mobile (strain ATCC 43663 / 163K / NCTC 11711) (Mesomycoplasma mobile).